Consider the following 387-residue polypeptide: Lactosylceramide alpha-2,3-sialyltransferase (387 aa).

Residues 1 to 33 (MPNEFTSAKLRSDCSRTSLQWYTQTQHKMRRPS) are Cytoplasmic-facing. The chain crosses the membrane as a helical; Signal-anchor for type II membrane protein span at residues 34–54 (LLLKDILKCMLVVFGVWLLYI). Topologically, residues 55 to 387 (LKLNYTAEEC…VVQDLSGGIH (333 aa)) are extracellular. N-linked (GlcNAc...) asparagine glycans are attached at residues Asn-58 and Asn-208. The cysteines at positions 167 and 325 are disulfide-linked.

The protein belongs to the glycosyltransferase 29 family.

The protein resides in the golgi apparatus membrane. The catalysed reaction is a beta-D-Gal-(1-&gt;4)-beta-D-Glc-(1&lt;-&gt;1)-Cer(d18:1(4E)) + CMP-N-acetyl-beta-neuraminate = a ganglioside GM3 (d18:1(4E)) + CMP + H(+). It catalyses the reaction ganglioside GA2 (d18:1(4E)/18:0) + CMP-N-acetyl-beta-neuraminate = ganglioside GM2 (d18:1(4E)/18:0) + CMP + H(+). The enzyme catalyses a beta-D-Gal-(1&lt;-&gt;1')-ceramide + CMP-N-acetyl-beta-neuraminate = N-acetyl-alpha-neuraminosyl-(2-&gt;3)-beta-D-galactosyl-(1&lt;-&gt;1')-ceramide + CMP + H(+). It carries out the reaction ganglioside GA1 (d18:1(4E)/18:0) + CMP-N-acetyl-beta-neuraminate = ganglioside GM1 (d18:1(4E)/18:0) + CMP + H(+). Its function is as follows. Transfers the sialyl group (N-acetyl-alpha-neuraminyl or NeuAc) from CMP-NeuAc to the non-reducing terminal galactose (Gal) of glycosphingolipids forming gangliosides (important molecules involved in the regulation of multiple cellular processes, including cell proliferation and differentiation, apoptosis, embryogenesis, development, and oncogenesis). Mainly involved in the biosynthesis of ganglioside GM3 but can also use different glycolipids as substrate acceptors such as D-galactosylceramide (GalCer), asialo-GM2 (GA2) and asialo-GM1 (GA1), although less preferentially than beta-D-Gal-(1-&gt;4)-beta-D-Glc-(1&lt;-&gt;1)-Cer (LacCer). This chain is Lactosylceramide alpha-2,3-sialyltransferase (St3gal5), found in Rattus norvegicus (Rat).